Consider the following 188-residue polypeptide: Putative manganese efflux pump MntP (188 aa).

Helical transmembrane passes span 1–21 (MLIQ…AVSI), 40–60 (LWFG…ASTF), 64–84 (VTAV…GNMV), 105–127 (HMLP…FAFM), 131–153 (IWLS…LYIG), and 166–186 (IAGG…HLGF).

It belongs to the MntP (TC 9.B.29) family.

The protein resides in the cell membrane. In terms of biological role, probably functions as a manganese efflux pump. This Bifidobacterium adolescentis (strain ATCC 15703 / DSM 20083 / NCTC 11814 / E194a) protein is Putative manganese efflux pump MntP.